A 935-amino-acid chain; its full sequence is Epstein-Barr nuclear antigen 3 (935 aa).

Disordered stretches follow at residues 1–89 (MDKD…DLPG), 342–373 (HVEG…VSRG), 399–446 (TEQG…VPEP), 611–634 (KQAS…MEGP), and 883–908 (HGRP…DHEP). A compositionally biased stretch (acidic residues) spans 10–19 (ALDDNMEEEV). A compositionally biased stretch (polar residues) spans 20–29 (PSTSVVQEQV). Over residues 352-366 (EESEDTESDGDDEDL) the composition is skewed to acidic residues. Positions 399–410 (TEQGKEVLEKAR) are enriched in basic and acidic residues. The segment covering 431 to 440 (SDETATSHGS) has biased composition (polar residues). Low complexity predominate over residues 615 to 630 (VEVQPPQVTQVSPQQP).

This sequence belongs to the herpesviridae EBNA-3 family. As to quaternary structure, interacts with human UCKL1. Interacts with host CTPB1; this interaction seems important for EBNA3-mediated transcriptional repression. Interacts with host RBPJ. Interacts with host USP12 and WDR48; these interactions form a deubiquitination-competent complex.

It localises to the host nucleus matrix. Its function is as follows. Plays an essential role for activation and immortalization of human B-cells. Represses transcription of viral promoters TP1 and Cp through interaction with host RBPJ, and inhibits EBNA2-mediated activation of these promoters. Since Cp is the promoter for all EBNA mRNAs, EBNA3A probably contributes to a negative autoregulatory control loop. In Homo sapiens (Human), this protein is Epstein-Barr nuclear antigen 3 (EBNA3).